Consider the following 356-residue polypeptide: Phospho-2-dehydro-3-deoxyheptonate aldolase, Tyr-sensitive (356 aa).

This sequence belongs to the class-I DAHP synthase family. A divalent metal cation is required as a cofactor.

The enzyme catalyses D-erythrose 4-phosphate + phosphoenolpyruvate + H2O = 7-phospho-2-dehydro-3-deoxy-D-arabino-heptonate + phosphate. It functions in the pathway metabolic intermediate biosynthesis; chorismate biosynthesis; chorismate from D-erythrose 4-phosphate and phosphoenolpyruvate: step 1/7. With respect to regulation, specifically feedback inhibited by tyrosine with 50% inhibition observed at 9 microM tyrosine, pH 7.0. In terms of biological role, stereospecific condensation of phosphoenolpyruvate (PEP) and D-erythrose-4-phosphate (E4P) giving rise to 3-deoxy-D-arabino-heptulosonate-7-phosphate (DAHP). The polypeptide is Phospho-2-dehydro-3-deoxyheptonate aldolase, Tyr-sensitive (aroF) (Escherichia coli (strain K12)).